Reading from the N-terminus, the 1447-residue chain is DNA topoisomerase 2 (1447 aa).

ATP is bound by residues Asn72, Asn101, Ser129–Asn131, and Gly142–Lys149. The segment at Lys323–Lys325 is interaction with DNA. Gln357–Lys359 is a binding site for ATP. The 118-residue stretch at Cys435–Glu552 folds into the Toprim domain. Mg(2+) contacts are provided by Glu441, Asp521, and Asp523. Positions Ile695 to Leu1169 constitute a Topo IIA-type catalytic domain. Tyr785 functions as the O-(5'-phospho-DNA)-tyrosine intermediate in the catalytic mechanism. The tract at residues Lys972–Gln981 is interaction with DNA. Disordered stretches follow at residues Glu1079–Pro1110, Glu1183–Pro1231, and Ala1246–Cys1447. Over residues Ala1081–Ala1094 the composition is skewed to acidic residues. Over residues Lys1255–Pro1281 the composition is skewed to basic and acidic residues. The segment covering Ala1283–Ala1293 has biased composition (acidic residues). At Ser1284 the chain carries Phosphoserine. 2 stretches are compositionally biased toward basic and acidic residues: residues Val1310–Asn1325 and Ser1332–Gly1359. Position 1344 is a phosphoserine (Ser1344). A Phosphothreonine modification is found at Thr1352. Residues Ser1374, Ser1385, Ser1392, and Ser1396 each carry the phosphoserine modification. The segment covering Ser1374–Asp1394 has biased composition (acidic residues). Positions Asp1395–Glu1408 are enriched in basic and acidic residues. Residues Ala1413 to Arg1423 are compositionally biased toward basic residues. Residues Glu1427 to Cys1447 are compositionally biased toward acidic residues.

This sequence belongs to the type II topoisomerase family. In terms of assembly, homodimer. Interacts with mod(mdg4). Interacts with barr. Interacts with ph-p. Interacts with mle; the interaction mediates association with the MSL dosage compensation complex. Mg(2+) is required as a cofactor. It depends on Mn(2+) as a cofactor. Requires Ca(2+) as cofactor. In terms of processing, phosphorylated. Phosphorylation by casein kinase II enhances ATPase activity.

It localises to the nucleus. It is found in the chromosome. Its subcellular location is the cytoplasm. It carries out the reaction ATP-dependent breakage, passage and rejoining of double-stranded DNA.. Functionally, control of topological states of DNA by transient breakage and subsequent rejoining of DNA strands. Topoisomerase II makes double-strand breaks. Essential during mitosis and meiosis for proper segregation of daughter chromosomes. During meiosis, it disrupts heterochromatic connections between achiasmate and chiasmate homologs after spindle assembly so that chromosomes can separate at prometaphase I. During mitosis, it functions in the separation of sister chromatids by establishing amphitelic kinetochore attachments in mitotic spindles. May have a role in chromatin condensation and chromosome structure. May be involved in X-chromosome dosage compensation, perhaps by modifying the topological state of compensated genes. Regulates activity of the gypsy chromatin insulator complex by binding to mod(mdg4) and preventing its degradation. This Drosophila melanogaster (Fruit fly) protein is DNA topoisomerase 2.